The sequence spans 470 residues: Putative multidrug resistance protein MdtD (470 aa).

Topologically, residues 1–11 are periplasmic; sequence MTELPDNTRWQ. Residues 12 to 32 traverse the membrane as a helical segment; sequence LWIVALGFFMQSLDTTIVNTA. Residues 33 to 48 lie on the Cytoplasmic side of the membrane; the sequence is LPSMAKSLGESPLHMH. Residues 49-69 form a helical membrane-spanning segment; it reads MVVVSYVLTVAVMLPASGWLA. Over 70-76 the chain is Periplasmic; sequence DKIGVRN. Residues 77-97 traverse the membrane as a helical segment; that stretch reads IFFAAIVLFTLGSLFCALSGT. The Cytoplasmic segment spans residues 98-101; it reads LNQL. A helical transmembrane segment spans residues 102 to 124; the sequence is VLARVLQGVGGAMMVPVGRLTVM. Residues 125-137 are Periplasmic-facing; sequence KIVPRAQYMAAMT. The helical transmembrane segment at 138-158 threads the bilayer; sequence FVTLPGQIGPLLGPALGGVLV. The Cytoplasmic portion of the chain corresponds to 159–164; that stretch reads EYASWH. The chain crosses the membrane as a helical span at residues 165–185; the sequence is WIFLINIPVGIVGAMATFMLM. The Periplasmic portion of the chain corresponds to 186–196; the sequence is PNYTIETRRFD. A helical membrane pass occupies residues 197–217; sequence LPGFLLLAIGMAVLTLALDGS. At 218–221 the chain is on the cytoplasmic side; it reads KSMG. Residues 222-242 traverse the membrane as a helical segment; the sequence is ISPWTLAGLAAGGAAAILLYL. Topologically, residues 243-262 are periplasmic; it reads LHAKKNSGALFSLRLFCTPT. A helical transmembrane segment spans residues 263–283; the sequence is FSLGLLGSFAGRIGSGMLPFM. The Cytoplasmic portion of the chain corresponds to 284–285; that stretch reads TP. A helical membrane pass occupies residues 286–306; it reads VFLQIGLGFSPFHAGLMMIPM. Topologically, residues 307–341 are periplasmic; it reads VLGSMGMKRIVVQIVNRFGYRRVLVATTLGLALVS. Residues 342-362 traverse the membrane as a helical segment; it reads LLFMSVALLGWYYLLPLVLLL. Over 363 to 395 the chain is Cytoplasmic; sequence QGMVNSARFSSMNTLTLKDLPDTLASSGNSLLS. A helical membrane pass occupies residues 396 to 416; that stretch reads MIMQLSMSIGVTIAGMLLGMF. The Periplasmic segment spans residues 417–430; it reads GQQHIGIDSSATHH. A helical membrane pass occupies residues 431–451; it reads VFMYTWLCMAVIIALPAIIFA. Residues 452 to 470 lie on the Cytoplasmic side of the membrane; that stretch reads RVPNDTQQNMVISRRKRSL.

It belongs to the major facilitator superfamily. TCR/Tet family.

The protein localises to the cell inner membrane. The polypeptide is Putative multidrug resistance protein MdtD (Salmonella paratyphi B (strain ATCC BAA-1250 / SPB7)).